Reading from the N-terminus, the 189-residue chain is MAERGSDIRPGHVLEHNNALYLVVKVMHTQPGKGGAYIQAEMKNLKTGAKQYERFRADGDIKRAIVDESDYQYIYGDGSMITIMHLKTYEQLTISKDILGDKSIYLQDNIIITLVFYNGEIISAKVPDYVTLQVVETEAVIKGQTVSSSAYKVAMLENNQRISVPTFIKPGDRIVVYTPDDSYYERAKG.

It belongs to the elongation factor P family.

The protein resides in the cytoplasm. Its pathway is protein biosynthesis; polypeptide chain elongation. Involved in peptide bond synthesis. Stimulates efficient translation and peptide-bond synthesis on native or reconstituted 70S ribosomes in vitro. Probably functions indirectly by altering the affinity of the ribosome for aminoacyl-tRNA, thus increasing their reactivity as acceptors for peptidyl transferase. The chain is Elongation factor P from Ehrlichia chaffeensis (strain ATCC CRL-10679 / Arkansas).